The following is a 162-amino-acid chain: Nucleotide-binding protein Francci3_0558 (162 aa).

It belongs to the YajQ family.

In terms of biological role, nucleotide-binding protein. This chain is Nucleotide-binding protein Francci3_0558, found in Frankia casuarinae (strain DSM 45818 / CECT 9043 / HFP020203 / CcI3).